A 201-amino-acid chain; its full sequence is 3-isopropylmalate dehydratase small subunit (201 aa).

The protein belongs to the LeuD family. LeuD type 1 subfamily. Heterodimer of LeuC and LeuD.

The enzyme catalyses (2R,3S)-3-isopropylmalate = (2S)-2-isopropylmalate. It functions in the pathway amino-acid biosynthesis; L-leucine biosynthesis; L-leucine from 3-methyl-2-oxobutanoate: step 2/4. Catalyzes the isomerization between 2-isopropylmalate and 3-isopropylmalate, via the formation of 2-isopropylmaleate. This is 3-isopropylmalate dehydratase small subunit from Rhizobium meliloti (strain 1021) (Ensifer meliloti).